A 712-amino-acid polypeptide reads, in one-letter code: Elongation factor G (712 aa).

A tr-type G domain is found at T8–T290. Residues A17 to T24, D88 to H92, and N142 to D145 contribute to the GTP site.

The protein belongs to the TRAFAC class translation factor GTPase superfamily. Classic translation factor GTPase family. EF-G/EF-2 subfamily.

Its subcellular location is the cytoplasm. In terms of biological role, catalyzes the GTP-dependent ribosomal translocation step during translation elongation. During this step, the ribosome changes from the pre-translocational (PRE) to the post-translocational (POST) state as the newly formed A-site-bound peptidyl-tRNA and P-site-bound deacylated tRNA move to the P and E sites, respectively. Catalyzes the coordinated movement of the two tRNA molecules, the mRNA and conformational changes in the ribosome. The protein is Elongation factor G of Acinetobacter baumannii (strain AB0057).